The sequence spans 1413 residues: ABC transporter G family member 33 (1413 aa).

A compositionally biased stretch (low complexity) spans 1-10 (MGSSFRSSSS). The disordered stretch occupies residues 1–21 (MGSSFRSSSSRNEHEDGGDEA). The span at 11 to 21 (RNEHEDGGDEA) shows a compositional bias: basic and acidic residues. The region spanning 140–412 (LKLSGVRTNE…FEECGFQCPE (273 aa)) is the ABC transporter 1 domain. Residue 172-179 (GPPGCGKT) participates in ATP binding. Residues 490 to 702 (ELFRACISRE…AEIGLSVNEF (213 aa)) enclose the ABC transmembrane type-2 1 domain. The next 6 membrane-spanning stretches (helical) occupy residues 509–529 (VYLF…TVFI), 546–566 (CLFF…SMTV), 580–600 (FYPA…LSFF), 626–646 (FMIL…IAAI), 652–672 (AAMT…GFAI), and 738–758 (LSAL…ALSF). One can recognise an ABC transporter 2 domain in the interval 813 to 1065 (ITFQDLNYYV…CVIEYFQNIP (253 aa)). 858–865 (GISGAGKT) lines the ATP pocket. The ABC transmembrane type-2 2 domain maps to 1138-1352 (EQFKSCLWKM…TLNLFFSSQY (215 aa)). Helical transmembrane passes span 1157 to 1177 (YNLM…LLFW), 1189 to 1209 (LFTV…NNCT), 1245 to 1265 (IPYI…MIGF), 1276 to 1296 (LYAM…LISI), 1302 to 1322 (VAAI…GFLI), 1330 to 1350 (WWVW…FFSS), and 1385 to 1405 (ITAI…AFFV).

Belongs to the ABC transporter superfamily. ABCG family. PDR (TC 3.A.1.205) subfamily. As to expression, expressed in roots and stems.

The protein resides in the membrane. May be a general defense protein. This Arabidopsis thaliana (Mouse-ear cress) protein is ABC transporter G family member 33 (ABCG33).